A 169-amino-acid chain; its full sequence is Ribosome maturation factor RimM (169 aa).

Residues 94-168 (EEGQYYYHQI…KVIVELLEGL (75 aa)) form the PRC barrel domain.

The protein belongs to the RimM family. In terms of assembly, binds ribosomal protein uS19.

Its subcellular location is the cytoplasm. Its function is as follows. An accessory protein needed during the final step in the assembly of 30S ribosomal subunit, possibly for assembly of the head region. Essential for efficient processing of 16S rRNA. May be needed both before and after RbfA during the maturation of 16S rRNA. It has affinity for free ribosomal 30S subunits but not for 70S ribosomes. The polypeptide is Ribosome maturation factor RimM (Limosilactobacillus fermentum (strain NBRC 3956 / LMG 18251) (Lactobacillus fermentum)).